A 163-amino-acid polypeptide reads, in one-letter code: MPESSFDVVSKADRQEVDNALNQTAKKIAQRFDFKDTGAQIRWSGDLGVEIRANSADRTLAVLDVFKEMLIKRGVSLKFLDVGEPKPSGKEFRLAVTIKQGIPTETARRLITLIKDEGPRGVHAQIQGDQLRVSSKKKDDLQAVIALLKAKDLDIALQFTNYR.

This sequence belongs to the YajQ family.

Nucleotide-binding protein. The polypeptide is Nucleotide-binding protein Acel_0286 (Acidothermus cellulolyticus (strain ATCC 43068 / DSM 8971 / 11B)).